The chain runs to 198 residues: MAPARLFALLLLFVGGVAESIRETEVIDPQDLLEGRYFSGALPDDEDVVGPGQESDDFELSGSGDLDDLEDSIIGPEVIHPLVPLDNHIPERAGSGSQVPTEPKKLEENEVIPKRISPIEESEDVSNKVSMSSTVQGSNIFERTEVLAALIVGGIVGILFAVFLILLLMYRMKKKDEGSYDLGKKPIYKKAPTNEFYA.

The N-terminal stretch at Met1–Ala18 is a signal peptide. The Extracellular segment spans residues Glu19–Glu145. 3 O-linked (Xyl...) (glycosaminoglycan) serine glycosylation sites follow: Ser39, Ser61, and Ser63. Ser95 is a glycosylation site (O-linked (Xyl...) (chondroitin sulfate) serine). A helical transmembrane segment spans residues Val146–Tyr170. Residues Arg171 to Ala198 lie on the Cytoplasmic side of the membrane.

It belongs to the syndecan proteoglycan family. As to quaternary structure, homodimer. Interacts with CDCP1 and SDCBP. Interacts (via its cytoplasmic domain) with GIPC (via its PDZ domain). Interacts (via its cytoplasmic domain) with NUDT16L1. Interacts with DNM2; this interaction is markedly enhanced at focal ahesion site upon induction of focal adhesions and stress-fiber formation. Shedding is enhanced by a number of factors such as heparanase, thrombin or EGF. Also by stress and wound healing. PMA-mediated shedding is inhibited by TIMP3. Post-translationally, O-glycosylated; contains both chondroitin sulfate and heparan sulfate. Ser-39, Ser-61 and Ser-63 can all be modified by either chondroitin sulfate or heparan sulfate, and the protein exists in forms that contain only chondroitin sulfate, only heparan sulfate and both chondroitin sulfate and heparan sulfate.

It localises to the membrane. The protein localises to the secreted. Functionally, cell surface proteoglycan which regulates exosome biogenesis in concert with SDCBP and PDCD6IP. The protein is Syndecan-4 of Pongo abelii (Sumatran orangutan).